The sequence spans 286 residues: tRNA(Ile)-lysidine synthase (286 aa).

Position 7–12 (7–12 (SGGPDS)) interacts with ATP.

The protein belongs to the tRNA(Ile)-lysidine synthase family.

The protein localises to the cytoplasm. The enzyme catalyses cytidine(34) in tRNA(Ile2) + L-lysine + ATP = lysidine(34) in tRNA(Ile2) + AMP + diphosphate + H(+). Its function is as follows. Ligates lysine onto the cytidine present at position 34 of the AUA codon-specific tRNA(Ile) that contains the anticodon CAU, in an ATP-dependent manner. Cytidine is converted to lysidine, thus changing the amino acid specificity of the tRNA from methionine to isoleucine. This is tRNA(Ile)-lysidine synthase from Mycoplasmopsis pulmonis (strain UAB CTIP) (Mycoplasma pulmonis).